Here is a 104-residue protein sequence, read N- to C-terminus: Large ribosomal subunit protein uL24 (104 aa).

Belongs to the universal ribosomal protein uL24 family. Part of the 50S ribosomal subunit.

Its function is as follows. One of two assembly initiator proteins, it binds directly to the 5'-end of the 23S rRNA, where it nucleates assembly of the 50S subunit. One of the proteins that surrounds the polypeptide exit tunnel on the outside of the subunit. This chain is Large ribosomal subunit protein uL24, found in Shewanella amazonensis (strain ATCC BAA-1098 / SB2B).